The sequence spans 79 residues: DNA gyrase inhibitor YacG (79 aa).

The Zn(2+) site is built by Cys7, Cys10, Cys26, and Cys30.

Belongs to the DNA gyrase inhibitor YacG family. Interacts with GyrB. Requires Zn(2+) as cofactor.

Inhibits all the catalytic activities of DNA gyrase by preventing its interaction with DNA. Acts by binding directly to the C-terminal domain of GyrB, which probably disrupts DNA binding by the gyrase. This chain is DNA gyrase inhibitor YacG, found in Shewanella pealeana (strain ATCC 700345 / ANG-SQ1).